A 278-amino-acid polypeptide reads, in one-letter code: Keratin-associated protein 5-1 (278 aa).

8 consecutive repeat copies span residues 42 to 45 (CCVP), 48 to 51 (CCKP), 130 to 133 (CCVP), 136 to 139 (CCKP), 142 to 145 (CCVP), 239 to 242 (CCKP), 258 to 261 (CCKP), and 268 to 271 (CCVP). The tract at residues 42–271 (CCVPVCCCKP…CCSQSSCCVP (230 aa)) is 8 X 4 AA repeats of C-C-X-P.

It belongs to the KRTAP type 5 family. In terms of assembly, interacts with hair keratins. In terms of tissue distribution, expressed in hair root but not in skin. Expressed also in lung, pancreas, ovary, testis.

Its function is as follows. In the hair cortex, hair keratin intermediate filaments are embedded in an interfilamentous matrix, consisting of hair keratin-associated protein (KRTAP), which are essential for the formation of a rigid and resistant hair shaft through their extensive disulfide bond cross-linking with abundant cysteine residues of hair keratins. The matrix proteins include the high-sulfur and high-glycine-tyrosine keratins. The protein is Keratin-associated protein 5-1 (KRTAP5-1) of Homo sapiens (Human).